Here is a 326-residue protein sequence, read N- to C-terminus: Flotillin-like protein FloA (326 aa).

The helical transmembrane segment at Phe-3–Gly-23 threads the bilayer.

Belongs to the flotillin-like FloA family. As to quaternary structure, homooligomerizes.

The protein localises to the cell membrane. The protein resides in the membrane raft. Functionally, found in functional membrane microdomains (FMM) that may be equivalent to eukaryotic membrane rafts. FMMs are highly dynamic and increase in number as cells age. Flotillins are thought to be important factors in membrane fluidity. This is Flotillin-like protein FloA from Desulforapulum autotrophicum (strain ATCC 43914 / DSM 3382 / VKM B-1955 / HRM2) (Desulfobacterium autotrophicum).